The sequence spans 164 residues: Ribosomal RNA large subunit methyltransferase H (164 aa).

Position 109 (Gly109) interacts with S-adenosyl-L-methionine.

Belongs to the RNA methyltransferase RlmH family. Homodimer.

It is found in the cytoplasm. It catalyses the reaction pseudouridine(1915) in 23S rRNA + S-adenosyl-L-methionine = N(3)-methylpseudouridine(1915) in 23S rRNA + S-adenosyl-L-homocysteine + H(+). In terms of biological role, specifically methylates the pseudouridine at position 1915 (m3Psi1915) in 23S rRNA. This chain is Ribosomal RNA large subunit methyltransferase H, found in Methylobacterium radiotolerans (strain ATCC 27329 / DSM 1819 / JCM 2831 / NBRC 15690 / NCIMB 10815 / 0-1).